A 238-amino-acid polypeptide reads, in one-letter code: Purine nucleoside phosphorylase DeoD-type (238 aa).

An a purine D-ribonucleoside-binding site is contributed by His4. Residues Gly20, Arg24, Arg43, and 87-90 contribute to the phosphate site; that span reads RVGS. Residues 179-181 and 203-204 contribute to the a purine D-ribonucleoside site; these read EME and SD. The active-site Proton donor is Asp204.

This sequence belongs to the PNP/UDP phosphorylase family. As to quaternary structure, homohexamer; trimer of homodimers.

It carries out the reaction a purine D-ribonucleoside + phosphate = a purine nucleobase + alpha-D-ribose 1-phosphate. It catalyses the reaction a purine 2'-deoxy-D-ribonucleoside + phosphate = a purine nucleobase + 2-deoxy-alpha-D-ribose 1-phosphate. Its function is as follows. Catalyzes the reversible phosphorolytic breakdown of the N-glycosidic bond in the beta-(deoxy)ribonucleoside molecules, with the formation of the corresponding free purine bases and pentose-1-phosphate. The sequence is that of Purine nucleoside phosphorylase DeoD-type from Pasteurella multocida (strain Pm70).